The sequence spans 341 residues: Malate dehydrogenase, mitochondrial (341 aa).

NAD(+)-binding positions include 35–41 and Asp-61; that span reads GAGGGIG. Substrate is bound by residues Arg-109 and Arg-115. Residue Asn-122 participates in NAD(+) binding. 2 residues coordinate substrate: Asn-147 and Arg-181. His-205 serves as the catalytic Proton acceptor. Position 254 (Met-254) interacts with NAD(+).

This sequence belongs to the LDH/MDH superfamily. MDH type 1 family. Homodimer.

The protein resides in the mitochondrion matrix. The enzyme catalyses (S)-malate + NAD(+) = oxaloacetate + NADH + H(+). This is Malate dehydrogenase, mitochondrial (MDH1) from Schizosaccharomyces pombe (strain 972 / ATCC 24843) (Fission yeast).